The chain runs to 668 residues: Fructose-1,6-bisphosphatase class 3 (668 aa).

The protein belongs to the FBPase class 3 family. Requires Mn(2+) as cofactor.

The enzyme catalyses beta-D-fructose 1,6-bisphosphate + H2O = beta-D-fructose 6-phosphate + phosphate. It participates in carbohydrate biosynthesis; gluconeogenesis. This chain is Fructose-1,6-bisphosphatase class 3, found in Clostridium botulinum (strain 657 / Type Ba4).